A 192-amino-acid chain; its full sequence is MKELFLIIGAPGSGKTTDASLIAQADATNITHYSTGDLLRAEVASGSELGKTIDSFISKGNLVPLDVVINTIVCALKAAPTKTIIIDGYPRSVEQMMEFDKVLSEQNEICLKGVIEVRVSEEVAKERVLGRNRGTDDNEEVFYNRMKVYTEPLNEILDFYQKKKLHFIIDGERAIEPIVADMKELIKKIQSI.

12-17 (GSGKTT) contacts ATP. Residues 34-63 (STGDLLRAEVASGSELGKTIDSFISKGNLV) form an NMP region. AMP is bound by residues Thr-35, Arg-40, 61-63 (NLV), 88-91 (GYPR), and Gln-95. Residues 130–136 (GRNRGTD) are LID. Residue Arg-131 participates in ATP binding. AMP contacts are provided by Arg-133 and Arg-145. Arg-173 contacts ATP.

It belongs to the adenylate kinase family. In terms of assembly, monomer.

The protein localises to the cytoplasm. It carries out the reaction AMP + ATP = 2 ADP. The protein operates within purine metabolism; AMP biosynthesis via salvage pathway; AMP from ADP: step 1/1. Its function is as follows. Catalyzes the reversible transfer of the terminal phosphate group between ATP and AMP. Plays an important role in cellular energy homeostasis and in adenine nucleotide metabolism. This Campylobacter jejuni (strain RM1221) protein is Adenylate kinase.